The sequence spans 516 residues: Adenine DNA glycosylase (516 aa).

The span at Met-1 to Lys-23 shows a compositional bias: basic residues. A disordered region spans residues Met-1–Gly-38. The Proton donor/acceptor role is filled by Glu-105. Residues Cys-261, Cys-268, Cys-271, and Cys-277 each contribute to the [4Fe-4S] cluster site. The Nudix hydrolase domain maps to Pro-335–Glu-467. Residues Val-376–Ala-398 carry the Nudix box motif. The tract at residues Cys-474–Gln-516 is disordered.

It belongs to the Nth/MutY family. It depends on [4Fe-4S] cluster as a cofactor. Expressed in brain, spleen, heart, liver and kidney.

The protein localises to the nucleus. It localises to the mitochondrion. The catalysed reaction is Hydrolyzes free adenine bases from 7,8-dihydro-8-oxoguanine:adenine mismatched double-stranded DNA, leaving an apurinic site.. In terms of biological role, involved in oxidative DNA damage repair. Initiates repair of A*oxoG to C*G by removing the inappropriately paired adenine base from the DNA backbone. Possesses both adenine and 2-OH-A DNA glycosylase activities. The sequence is that of Adenine DNA glycosylase (Mutyh) from Rattus norvegicus (Rat).